A 110-amino-acid polypeptide reads, in one-letter code: uncharacterized protein (110 aa).

The signal sequence occupies residues M1–A19. N-linked (GlcNAc...) asparagine glycosylation occurs at N101.

Component of the acid-soluble and acid-insoluble organic matrix of prismatic shell layers (at protein level).

The protein resides in the secreted. This is an uncharacterized protein from Haliotis asinina (Donkey's ear abalone).